We begin with the raw amino-acid sequence, 294 residues long: MARLLITGAGGQLGRSLAKLLVDNGRYEVLALDFSELDITNKDMVFSIIDSFKPNVIINAAAYTSVDQAELEVSSAYSVNVRGVQYLAEAAIRHNSAILHVSTDYVFDGYKSGKYKETDIIHPLCVYGKSKAEGERLLLTLSPKSIILRTSWTFGEYGNNFVKTMLRLAKNRDILGVVADQIGGPTYSGDIASVLIQIAEKIIVGETVKYGIYHFTGEPCVSWYDFAIAIFDEAVAQKVLENVPLVNAITTADYPTLAKRPANSCLDLTKIQQAFGIQPSDWQRALKNIRAYAE.

Residues 11 to 13 (GQL), 38 to 39 (DI), and 62 to 64 (AYT) each bind NADH. Residues 12–13 (QL), 38–39 (DI), and 62–64 (AYT) contribute to the NADPH site. 103 to 104 (TD) contacts dTDP-beta-L-rhamnose. NADH-binding residues include Tyr-127 and Lys-131. The NADPH site is built by Tyr-127 and Lys-131. Catalysis depends on Tyr-127, which acts as the Proton donor/acceptor. Trp-152 lines the dTDP-beta-L-rhamnose pocket.

Belongs to the dTDP-4-dehydrorhamnose reductase family. Homodimer. Mg(2+) is required as a cofactor.

It carries out the reaction dTDP-beta-L-rhamnose + NADP(+) = dTDP-4-dehydro-beta-L-rhamnose + NADPH + H(+). Its pathway is carbohydrate biosynthesis; dTDP-L-rhamnose biosynthesis. The protein operates within bacterial outer membrane biogenesis; LPS O-antigen biosynthesis. Functionally, involved in the biosynthesis of the dTDP-L-rhamnose which is an important component of lipopolysaccharide (LPS). Catalyzes the reduction of dTDP-6-deoxy-L-lyxo-4-hexulose to yield dTDP-L-rhamnose. The sequence is that of dTDP-4-dehydrorhamnose reductase from Aggregatibacter actinomycetemcomitans (Actinobacillus actinomycetemcomitans).